The primary structure comprises 314 residues: Olfactory receptor-like protein I9 (314 aa).

Residues 1-25 are Extracellular-facing; it reads MTRRNQTAISQFFLLGLPFPPEYQH. A glycan (N-linked (GlcNAc...) asparagine) is linked at N5. The chain crosses the membrane as a helical span at residues 26 to 50; that stretch reads LFYALFLAMYLTTLLGNLIIIILIL. Over 51–57 the chain is Cytoplasmic; the sequence is LDSHLHT. A helical transmembrane segment spans residues 58–79; it reads PMYLFLSNLSFADLCFSSVTMP. At 80 to 100 the chain is on the extracellular side; sequence KLLQNMQSQVPSIPYAGCLAQ. A disulfide bridge links C97 with C189. The chain crosses the membrane as a helical span at residues 101 to 120; the sequence is IYFFLFFGDLGNFLLVAMAY. The Cytoplasmic segment spans residues 121 to 139; that stretch reads DRYVAICFPLHYMSIMSPK. A helical transmembrane segment spans residues 140–158; it reads LCVSLVVLSWVLTTFHAML. The Extracellular segment spans residues 159–196; sequence HTLLMARLSFCEDSVIPHYFCDMSTLLKVACSDTHDNE. Residues 197–219 traverse the membrane as a helical segment; that stretch reads LAIFILGGPIVVLPFLLIIVSYA. Residues 220–236 lie on the Cytoplasmic side of the membrane; that stretch reads RIVSSIFKVPSSQSIHK. Residues 237–260 form a helical membrane-spanning segment; it reads AFSTCGSHLSVVSLFYGTVIGLYL. The Extracellular segment spans residues 261–272; sequence CPSANNSTVKET. Residues 273-292 traverse the membrane as a helical segment; that stretch reads VMSLMYTMVTPMLNPFIYSL. The Cytoplasmic portion of the chain corresponds to 293-314; the sequence is RNRDIKDALEKIMCKKQIPSFL.

It belongs to the G-protein coupled receptor 1 family. Olfactory epithelium.

The protein localises to the cell membrane. Functionally, odorant receptor. The protein is Olfactory receptor-like protein I9 of Rattus norvegicus (Rat).